A 173-amino-acid polypeptide reads, in one-letter code: MKHSFEVKLAAVNHYLAGHAGIISTAKLFQLSHTSLSHWINLFLLHGPRALDCRHKRSYSPEDKLCVVLYALGHSESLPRVAARFNIPSHNTVKNWIKGYRKSGNEAFIRCRKEKSMTRSDDTHENEANMTPEEMKNELRYLRAENAYLKAMQEHLLEKKRQELEKKRKSSRA.

The tract at residues 115-135 is disordered; sequence KSMTRSDDTHENEANMTPEEM.

The protein belongs to the IS150/IS1296 orfA family.

This Escherichia coli protein is Insertion element IS1397 uncharacterized 20.1 kDa protein.